The chain runs to 156 residues: Small ribosomal subunit protein uS7 (156 aa).

The protein belongs to the universal ribosomal protein uS7 family. As to quaternary structure, part of the 30S ribosomal subunit. Contacts proteins S9 and S11.

One of the primary rRNA binding proteins, it binds directly to 16S rRNA where it nucleates assembly of the head domain of the 30S subunit. Is located at the subunit interface close to the decoding center, probably blocks exit of the E-site tRNA. This is Small ribosomal subunit protein uS7 from Campylobacter hominis (strain ATCC BAA-381 / DSM 21671 / CCUG 45161 / LMG 19568 / NCTC 13146 / CH001A).